Consider the following 356-residue polypeptide: Probable arabinogalactan endo-beta-1,4-galactanase A (356 aa).

An N-terminal signal peptide occupies residues Met1–Ala21. Asn133 carries N-linked (GlcNAc...) asparagine glycosylation. Glu157 (proton donor) is an active-site residue. Glu268 functions as the Nucleophile in the catalytic mechanism.

This sequence belongs to the glycosyl hydrolase 53 family.

The protein resides in the secreted. It catalyses the reaction The enzyme specifically hydrolyzes (1-&gt;4)-beta-D-galactosidic linkages in type I arabinogalactans.. Its function is as follows. Endogalactanase involved in the degradation of plant cell wall polysaccharides, and more particularly of hairy regions of pectin. The polypeptide is Probable arabinogalactan endo-beta-1,4-galactanase A (galA) (Neosartorya fischeri (strain ATCC 1020 / DSM 3700 / CBS 544.65 / FGSC A1164 / JCM 1740 / NRRL 181 / WB 181) (Aspergillus fischerianus)).